A 458-amino-acid chain; its full sequence is Biphenyl dioxygenase subunit alpha (458 aa).

Positions 58-156 (WLLLGHESHV…KEGDCGFDKA (99 aa)) constitute a Rieske domain. The [2Fe-2S] cluster site is built by Cys-100, His-102, Cys-120, and His-123. 2 residues coordinate Fe cation: His-233 and His-239.

Belongs to the bacterial ring-hydroxylating dioxygenase alpha subunit family. As to quaternary structure, heterohexamer consisting of three BphA subunits and three BphE subunits. A ferredoxin (BphF) and a ferredoxin reductase (BphG) must be present to obtain activity. [2Fe-2S] cluster serves as cofactor. It depends on Fe cation as a cofactor.

The enzyme catalyses biphenyl + NADH + O2 + H(+) = (2R,3S)-3-phenylcyclohexa-3,5-diene-1,2-diol + NAD(+). Its pathway is xenobiotic degradation; biphenyl degradation; 2-hydroxy-2,4-pentadienoate and benzoate from biphenyl: step 1/4. The sequence is that of Biphenyl dioxygenase subunit alpha (bphA) from Metapseudomonas furukawaii (Pseudomonas furukawaii).